The primary structure comprises 115 residues: Holo-[acyl-carrier-protein] synthase (115 aa).

Mg(2+) contacts are provided by D8 and E50.

Belongs to the P-Pant transferase superfamily. AcpS family. Requires Mg(2+) as cofactor.

Its subcellular location is the cytoplasm. It catalyses the reaction apo-[ACP] + CoA = holo-[ACP] + adenosine 3',5'-bisphosphate + H(+). Functionally, transfers the 4'-phosphopantetheine moiety from coenzyme A to a Ser of acyl-carrier-protein. The protein is Holo-[acyl-carrier-protein] synthase of Arthrobacter sp. (strain FB24).